A 64-amino-acid chain; its full sequence is Large ribosomal subunit protein bL28 (64 aa).

Positions 1–23 (MSKECYFTGRKTVSSNNRSHAMN) are disordered. Residues 11-23 (KTVSSNNRSHAMN) show a composition bias toward polar residues.

The protein belongs to the bacterial ribosomal protein bL28 family.

The protein is Large ribosomal subunit protein bL28 of Lactococcus lactis subsp. cremoris (strain SK11).